Here is a 439-residue protein sequence, read N- to C-terminus: Ribosomal protein uS12 methylthiotransferase RimO (439 aa).

Positions 7 to 119 constitute an MTTase N-terminal domain; that stretch reads KQLCLISLGC…IDILIAKKQN (113 aa). The [4Fe-4S] cluster site is built by Cys16, Cys50, Cys82, Cys151, Cys155, and Cys158. Positions 137-368 constitute a Radical SAM core domain; the sequence is TGSSVHAYVK…ALKHQNHSFK (232 aa).

The protein belongs to the methylthiotransferase family. RimO subfamily. The cofactor is [4Fe-4S] cluster.

The protein localises to the cytoplasm. The catalysed reaction is L-aspartate(89)-[ribosomal protein uS12]-hydrogen + (sulfur carrier)-SH + AH2 + 2 S-adenosyl-L-methionine = 3-methylsulfanyl-L-aspartate(89)-[ribosomal protein uS12]-hydrogen + (sulfur carrier)-H + 5'-deoxyadenosine + L-methionine + A + S-adenosyl-L-homocysteine + 2 H(+). In terms of biological role, catalyzes the methylthiolation of an aspartic acid residue of ribosomal protein uS12. The protein is Ribosomal protein uS12 methylthiotransferase RimO of Helicobacter pylori (strain HPAG1).